A 298-amino-acid chain; its full sequence is Octopine catabolism/uptake operon regulatory protein OccR (298 aa).

Residues 1-58 (MNLRQVEAFRAVMLTGQMTAAAELMLVTQPAISRLIKDFEQATKLQLFERRGNHIIPT) form the HTH lysR-type domain. Positions 18–37 (MTAAAELMLVTQPAISRLIK) form a DNA-binding region, H-T-H motif.

The protein belongs to the LysR transcriptional regulatory family.

Positive regulatory protein for the occ operon involved in octopine catabolism and uptake. Also acts as a negative regulator of its expression. In Agrobacterium tumefaciens (strain Ach5), this protein is Octopine catabolism/uptake operon regulatory protein OccR (occR).